Here is a 362-residue protein sequence, read N- to C-terminus: E3 ubiquitin-protein ligase TM129 (362 aa).

Residues 1 to 6 (MDSPEV) are Lumenal-facing. Residues 7-27 (TFTLAYLVFAVCFVFTPTEFH) traverse the membrane as a helical segment. Residues 28 to 56 (SAGLTVQNLLSGWLGSEDAAFVPYHLRRT) lie on the Cytoplasmic side of the membrane. Residues 57-77 (AATLLCHSLLPLGYYVGMCFA) traverse the membrane as a helical segment. Topologically, residues 78 to 94 (ASEKQLYYPSQTPETWR) are lumenal. A helical transmembrane segment spans residues 95 to 115 (AFLLLALMLPAIACTLIYYWS). At 116–362 (RDHWACHPLA…FCVLDVCAVR (247 aa)) the chain is on the cytoplasmic side. The RING-type; degenerate zinc-finger motif lies at 285–350 (CIGCMQTQAS…ASRVPCPTCR (66 aa)).

The protein belongs to the TMEM129 family. As to quaternary structure, integral component of ER-resident dislocation complexes.

The protein resides in the endoplasmic reticulum membrane. The enzyme catalyses S-ubiquitinyl-[E2 ubiquitin-conjugating enzyme]-L-cysteine + [acceptor protein]-L-lysine = [E2 ubiquitin-conjugating enzyme]-L-cysteine + N(6)-ubiquitinyl-[acceptor protein]-L-lysine.. It participates in protein modification; protein ubiquitination. In terms of biological role, E3 ubiquitin-protein ligase involved in ER-associated protein degradation, preferentially associates with the E2 enzyme UBE2J2. Exploited by viral US11 proteins to mediate HLA class I proteins degradation. This is E3 ubiquitin-protein ligase TM129 (TMEM129) from Bos taurus (Bovine).